The chain runs to 325 residues: uncharacterized protein (325 aa).

Disordered stretches follow at residues 32–65 (LSTP…VPPI) and 99–152 (GDSL…ASSG). In terms of domain architecture, Globin spans 153–291 (LVPSLNRLRI…LFTGVRDGYY (139 aa)).

This is an uncharacterized protein from Caenorhabditis elegans.